Consider the following 228-residue polypeptide: Cytochrome b5 domain-containing protein 1 (228 aa).

Residues 17–83 (RRYFTPSEVA…DPQTRDIRKH (67 aa)) enclose the Cytochrome b5 heme-binding domain. A heme-binding site is contributed by histidine 83.

Belongs to the cytochrome b5 family.

The protein localises to the cytoplasm. Its subcellular location is the cytoskeleton. The protein resides in the cilium axoneme. Functionally, radial spoke stalk protein that binds heme under oxidizing conditions. Required for the coordinated beating of multiple cilia maybe by functioning in a redox signaling pathway. The sequence is that of Cytochrome b5 domain-containing protein 1 (Cyb5d1) from Mus musculus (Mouse).